Reading from the N-terminus, the 336-residue chain is MNTEATHDKTEALSTGVRLRNAREQLGLSQQAVAERLCLKVSTVRDIEEDKAPADLASTFLRGYIRSYAKLVHIPEEELLPMMEKHAPVRAAKVAPMQTFSLGKRRKKRDGWLMSFTWLVLFVVIGLTGAWWWQNHKAQQEEITTMADQSSAALNNSGNNGAQSVPLNTDSASTSSEPQTAETDSQTVEPVQTPAPAMTPDQTAAQNAVVSPSQANVDSAPAVTPTTTGNVNVTQPLPTDQAGVAATTADANALVMNFSADCWLEVTDATGKKLFSGLQRKDGTLNLTGQAPYKLKIGAPSAVQIQYQGKPVDLSRFIRTNQVARLTVSAEQSAAQ.

The Cytoplasmic segment spans residues 1-111; sequence MNTEATHDKT…LGKRRKKRDG (111 aa). Residues 19-71 enclose the HTH cro/C1-type domain; that stretch reads LRNAREQLGLSQQAVAERLCLKVSTVRDIEEDKAPADLASTFLRGYIRSYAKL. Residues 30–49 constitute a DNA-binding region (H-T-H motif); the sequence is QQAVAERLCLKVSTVRDIEE. The helical; Signal-anchor for type II membrane protein transmembrane segment at 112-132 threads the bilayer; that stretch reads WLMSFTWLVLFVVIGLTGAWW. At 133–336 the chain is on the periplasmic side; sequence WQNHKAQQEE…TVSAEQSAAQ (204 aa). Positions 152–164 are enriched in low complexity; the sequence is AALNNSGNNGAQS. Residues 152–235 are disordered; sequence AALNNSGNNG…TTTGNVNVTQ (84 aa). Polar residues-rich tracts occupy residues 165 to 190 and 200 to 217; these read VPLN…TVEP and PDQT…QANV. Positions 220 to 235 are enriched in low complexity; that stretch reads APAVTPTTTGNVNVTQ.

Belongs to the RodZ family.

Its subcellular location is the cell inner membrane. Functionally, cytoskeletal protein that is involved in cell-shape control through regulation of the length of the long axis. In Enterobacter sp. (strain 638), this protein is Cytoskeleton protein RodZ.